The primary structure comprises 834 residues: Periplasmic nitrate reductase (834 aa).

A signal peptide (tat-type signal) is located at residues 1–29 (MNLTRREFAKANAAAIAAAAAGLPILVRA). Residues 41 to 97 (LDWNKAPCRFCGTGCSVMVATRDGQVVATHGDIKAEVNRGINCVKGYFLSKIMYGSD) form the 4Fe-4S Mo/W bis-MGD-type domain. The [4Fe-4S] cluster site is built by C48, C51, C55, and C83. Mo-bis(molybdopterin guanine dinucleotide) contacts are provided by residues K85, Q152, N177, C181, 214-221 (WGSNMAEM), 245-249 (STFEH), 264-266 (QTD), M375, Q379, N485, 511-512 (SD), K534, D561, and 721-730 (TGRVLEHWHT). F797 provides a ligand contact to substrate. Residues N805 and K822 each coordinate Mo-bis(molybdopterin guanine dinucleotide).

It belongs to the prokaryotic molybdopterin-containing oxidoreductase family. NasA/NapA/NarB subfamily. As to quaternary structure, component of the periplasmic nitrate reductase NapAB complex composed of NapA and NapB. Requires [4Fe-4S] cluster as cofactor. Mo-bis(molybdopterin guanine dinucleotide) serves as cofactor. Post-translationally, predicted to be exported by the Tat system. The position of the signal peptide cleavage has not been experimentally proven.

It is found in the periplasm. It carries out the reaction 2 Fe(II)-[cytochrome] + nitrate + 2 H(+) = 2 Fe(III)-[cytochrome] + nitrite + H2O. Catalytic subunit of the periplasmic nitrate reductase complex NapAB. Receives electrons from NapB and catalyzes the reduction of nitrate to nitrite. The sequence is that of Periplasmic nitrate reductase from Pseudomonas paraeruginosa (strain DSM 24068 / PA7) (Pseudomonas aeruginosa (strain PA7)).